Here is a 501-residue protein sequence, read N- to C-terminus: MTFISKTQHADVVLIGGGIMSATLGAFIKQLEPTWTISLFERLDEAGLESSGPWNNAGTGHAALCELNYSPAAKDGSVDPSKALHINEQFQLSRQFWSHLVDSNVIGSPKGFINTVPHMSFVIGDDHSNFLKNRYEALKPNTLFRSMEYTEDQDQIAKWAPLIVKGRDRKQRVAATRAAEGTDVDFGALTRELTGYLQSSGAEVNYGHDVTNIHRAAGGGWDLSIKHPKSGEHGRIHAKFVFVGAGGGALHLLQASGIPESKGYGGFPVSGQFFRCTDDAITSQHSAKVYGQASVGAPPMSVPHLDTRYVDGKRSLLFGPYAGFSTNFLKTSSYLDLPLSIRPGNIIPMLAVAKDNMDLTAYLIKEVAKRHEAKVEALREYYPEAAGGNWELITAGQRVQIIKKHPQKGGVLQFGTEVIASRDGSIGALLGASPGASTAVPIMIELLQKSFPKNFKGWQSKLKDMMPGYGVKLNENPDLAAELEASTARSLQLEVANAIQG.

This sequence belongs to the MQO family. Requires FAD as cofactor.

The catalysed reaction is (S)-malate + a quinone = a quinol + oxaloacetate. It functions in the pathway carbohydrate metabolism; tricarboxylic acid cycle; oxaloacetate from (S)-malate (quinone route): step 1/1. The chain is Probable malate:quinone oxidoreductase from Paenarthrobacter aurescens (strain TC1).